The sequence spans 405 residues: Acetate kinase (405 aa).

Asn-7 contacts Mg(2+). ATP is bound at residue Lys-14. Arg-90 lines the substrate pocket. Catalysis depends on Asp-147, which acts as the Proton donor/acceptor. ATP contacts are provided by residues 207–211 (HLGNG), 282–284 (DFR), and 331–335 (GVGEN). Glu-384 provides a ligand contact to Mg(2+).

This sequence belongs to the acetokinase family. Homodimer. Requires Mg(2+) as cofactor. It depends on Mn(2+) as a cofactor.

It is found in the cytoplasm. The catalysed reaction is acetate + ATP = acetyl phosphate + ADP. It participates in metabolic intermediate biosynthesis; acetyl-CoA biosynthesis; acetyl-CoA from acetate: step 1/2. Its function is as follows. Catalyzes the formation of acetyl phosphate from acetate and ATP. Can also catalyze the reverse reaction. This chain is Acetate kinase, found in Clostridium kluyveri (strain ATCC 8527 / DSM 555 / NBRC 12016 / NCIMB 10680 / K1).